We begin with the raw amino-acid sequence, 327 residues long: Peroxidase 15 (327 aa).

The first 23 residues, 1–23 (MASFSPLLAMALAIFIFSSHSNA), serve as a signal peptide directing secretion. A Pyrrolidone carboxylic acid modification is found at Gln-24. 4 disulfides stabilise this stretch: Cys-34–Cys-115, Cys-67–Cys-72, Cys-121–Cys-323, and Cys-200–Cys-232. Asn-36 carries N-linked (GlcNAc...) asparagine glycosylation. His-65 functions as the Proton acceptor in the catalytic mechanism. Residues Asp-66, Val-69, Gly-71, Asp-73, and Ser-75 each contribute to the Ca(2+) site. 3 N-linked (GlcNAc...) asparagine glycosylation sites follow: Asn-81, Asn-96, and Asn-159. Pro-163 is a binding site for substrate. N-linked (GlcNAc...) asparagine glycans are attached at residues Asn-168 and Asn-171. His-193 contributes to the heme b binding site. Position 194 (Thr-194) interacts with Ca(2+). N-linked (GlcNAc...) asparagine glycosylation is found at Asn-209 and Asn-221. Positions 245, 248, and 253 each coordinate Ca(2+). 2 N-linked (GlcNAc...) asparagine glycosylation sites follow: Asn-287 and Asn-291.

This sequence belongs to the peroxidase family. Classical plant (class III) peroxidase subfamily. Ca(2+) is required as a cofactor. It depends on heme b as a cofactor.

It is found in the secreted. The catalysed reaction is 2 a phenolic donor + H2O2 = 2 a phenolic radical donor + 2 H2O. In terms of biological role, removal of H(2)O(2), oxidation of toxic reductants, biosynthesis and degradation of lignin, suberization, auxin catabolism, response to environmental stresses such as wounding, pathogen attack and oxidative stress. These functions might be dependent on each isozyme/isoform in each plant tissue. The polypeptide is Peroxidase 15 (Ipomoea batatas (Sweet potato)).